A 549-amino-acid polypeptide reads, in one-letter code: Probable protein kinase UbiB (549 aa).

A Protein kinase domain is found at 123-501 (DFNETPLASA…QQQAHKSNYL (379 aa)). ATP is bound by residues 129–137 (LASASISQV) and Lys-152. Asp-287 functions as the Proton acceptor in the catalytic mechanism. The next 2 helical transmembrane spans lie at 498–518 (SNYL…LFNQ) and 520–540 (ATLW…IIGW).

This sequence belongs to the ABC1 family. UbiB subfamily.

The protein resides in the cell inner membrane. The protein operates within cofactor biosynthesis; ubiquinone biosynthesis [regulation]. Functionally, is probably a protein kinase regulator of UbiI activity which is involved in aerobic coenzyme Q (ubiquinone) biosynthesis. The protein is Probable protein kinase UbiB of Shewanella sp. (strain MR-4).